Consider the following 119-residue polypeptide: Ribosome-binding factor A (119 aa).

Belongs to the RbfA family. Monomer. Binds 30S ribosomal subunits, but not 50S ribosomal subunits or 70S ribosomes.

The protein resides in the cytoplasm. Its function is as follows. One of several proteins that assist in the late maturation steps of the functional core of the 30S ribosomal subunit. Associates with free 30S ribosomal subunits (but not with 30S subunits that are part of 70S ribosomes or polysomes). Required for efficient processing of 16S rRNA. May interact with the 5'-terminal helix region of 16S rRNA. The sequence is that of Ribosome-binding factor A from Lactococcus lactis subsp. cremoris (strain SK11).